The sequence spans 157 residues: Transcriptional regulator MraZ (157 aa).

SpoVT-AbrB domains follow at residues 7-54 and 83-126; these read TYEC…PMKE and VRII…DKDL.

This sequence belongs to the MraZ family. Forms oligomers.

It localises to the cytoplasm. The protein localises to the nucleoid. The sequence is that of Transcriptional regulator MraZ from Flavobacterium psychrophilum (strain ATCC 49511 / DSM 21280 / CIP 103535 / JIP02/86).